The following is a 358-amino-acid chain: MALTRLVIRDFRNIEEADLALAPGFNFLVGANGSGKTSVLEAIYTLGHGRAFRSLQAGRVIRHDCSAFVLHGRIDDGGGRERAVGLSKDRQGDSKVRIDGSDGHKVAELAQMLPMQLITPEGFTLLNGGPKYRRAFLDWGCFHGERSFFTAWNNLRRVLKQRNAALRQVTRYAQIRPWDQELVPLAEQVSALRAAYSEAIAQDIAATCSQFLPEYALSFSFMRGWDRESDYAALLERHFERDRALTYTAQGPHKADFRIRADGTPVEDLLSRGQLKLLMCALRLAQGEYLTRHSGRQCLYLIDDFASELDAGRRRLLAERLKSTGAQVFVSAVNADQIGDMVDEKGKMFHVEQGKIAV.

ATP is bound at residue 30–37 (GANGSGKT).

It belongs to the RecF family.

It localises to the cytoplasm. Functionally, the RecF protein is involved in DNA metabolism; it is required for DNA replication and normal SOS inducibility. RecF binds preferentially to single-stranded, linear DNA. It also seems to bind ATP. The protein is DNA replication and repair protein RecF of Edwardsiella ictaluri (strain 93-146).